The primary structure comprises 1001 residues: E3 ubiquitin-protein ligase etc-1 (1001 aa).

One can recognise an IQ domain in the interval 28 to 57 (QEKAARKVQKFWRGHRVQHNQRLLFRAEFD). Positions 66 to 115 (LEETIKMAQLLVNFYETNKDEERLVMTLSELVKLKTSDKEFEKRIRETQR) form a coiled coil. In terms of domain architecture, HECT spans 658-1001 (KVNDLKSMVR…INSGAGFELA (344 aa)). Cysteine 969 acts as the Glycyl thioester intermediate in catalysis.

In terms of assembly, interacts with ify-1 and cyb-1.

The catalysed reaction is S-ubiquitinyl-[E2 ubiquitin-conjugating enzyme]-L-cysteine + [acceptor protein]-L-lysine = [E2 ubiquitin-conjugating enzyme]-L-cysteine + N(6)-ubiquitinyl-[acceptor protein]-L-lysine.. Its pathway is protein modification; protein ubiquitination. Its function is as follows. E3 ubiquitin-protein ligase that accepts ubiquitin from E2 ubiquitin-conjugating enzymes, such as ubc-18, in the form of a thioester and then directly transfers the ubiquitin to targeted substrates. Ubiquitinates ify-1 and cyb-1 targeting them for degradation in post-meiotic embryos. In Caenorhabditis elegans, this protein is E3 ubiquitin-protein ligase etc-1.